Here is a 511-residue protein sequence, read N- to C-terminus: Alpha-amylase 2B (511 aa).

Positions 1-15 (MKFFLLLFTIGFCWA) are cleaved as a signal peptide. At Gln16 the chain carries Pyrrolidone carboxylic acid. 3 disulfides stabilise this stretch: Cys43/Cys101, Cys85/Cys130, and Cys156/Cys175. Ca(2+)-binding residues include Asn115, Arg173, and Asp182. Arg210 lines the chloride pocket. The active-site Nucleophile is Asp212. His216 is a binding site for Ca(2+). Glu248 serves as the catalytic Proton donor. Chloride contacts are provided by Asn313 and Arg352. Intrachain disulfides connect Cys393/Cys399 and Cys465/Cys477.

This sequence belongs to the glycosyl hydrolase 13 family. In terms of assembly, monomer. Ca(2+) serves as cofactor. Chloride is required as a cofactor.

It is found in the secreted. The enzyme catalyses Endohydrolysis of (1-&gt;4)-alpha-D-glucosidic linkages in polysaccharides containing three or more (1-&gt;4)-alpha-linked D-glucose units.. The chain is Alpha-amylase 2B (AMY2B) from Homo sapiens (Human).